The primary structure comprises 297 residues: Cyclin-dependent kinase 1 (297 aa).

The Protein kinase domain occupies 4–293 (YQKVEKIGEG…AKRALQQNYL (290 aa)). ATP is bound by residues 10 to 18 (IGEGTYGVV) and Lys-33. Position 14 is a phosphothreonine (Thr-14). At Tyr-15 the chain carries Phosphotyrosine. Asp-134 acts as the Proton acceptor in catalysis. Residue Thr-167 is modified to Phosphothreonine.

The protein belongs to the protein kinase superfamily. CMGC Ser/Thr protein kinase family. CDC2/CDKX subfamily. Forms a stable but non-covalent complex with regulatory subunit suc1 and with a cyclin. Interacts with cyclin cdc13. Interacts with cyclin cig2. Interacts with cdc37.

It localises to the cytoplasm. The catalysed reaction is L-seryl-[protein] + ATP = O-phospho-L-seryl-[protein] + ADP + H(+). It catalyses the reaction L-threonyl-[protein] + ATP = O-phospho-L-threonyl-[protein] + ADP + H(+). Phosphorylation at Thr-14 or Tyr-15 inactivates the enzyme, while phosphorylation at Thr-167 activates it. Cyclin-dependent kinase that acts as a master regulator of the mitotic and meiotic cell cycles. Required to drive the G1-S and G2-M transitions, and initiation of premeiotic DNA replication and meiosis II. More than 200 substrates have been identified. Substrate specificity is in part regulated by the bound cyclin protein. When complexed with cyclin cig2, it drives the G1-S phase transition. When complexed with cyclin cdc13, it drives the G2-M transition and initiation of meiosis II. Its activity rises throughout the cell cycle and substrate specificity is further influenced by activity thresholds with more sensitive substrates phosphorylated earlier in the cell cycle than less sensitive substrates. Phosphorylates dis1 during metaphase to ensure proper microtubule dynamics and accurate chromosome segregation. Phosphorylates the repetitive C-terminus of the large subunit of RNA polymerase II rpb1. Inactivated by checkpoint signaling following detection of cellular damage, leading to cell cycle arrest to allow damage repair. Inactivated during G2 DNA damage checkpoint signaling. Inactivated in response to defective RNA splicing. The chain is Cyclin-dependent kinase 1 from Schizosaccharomyces pombe (strain 972 / ATCC 24843) (Fission yeast).